Here is a 552-residue protein sequence, read N- to C-terminus: Beta-hexosaminidase A (552 aa).

Residues 1-15 form the signal peptide; the sequence is MRLIVLSLLFTSTLA. N-linked (GlcNAc...) asparagine glycosylation is present at asparagine 44. Glutamate 322 (proton donor) is an active-site residue. Asparagine 348, asparagine 409, and asparagine 457 each carry an N-linked (GlcNAc...) asparagine glycan.

Belongs to the glycosyl hydrolase 20 family.

The protein localises to the lysosome. It carries out the reaction Hydrolysis of terminal non-reducing N-acetyl-D-hexosamine residues in N-acetyl-beta-D-hexosaminides.. In terms of biological role, responsible for the degradation of GM2 gangliosides, and a variety of other molecules containing terminal N-acetyl hexosamines. Degrades chitotriose. The sequence is that of Beta-hexosaminidase A from Caenorhabditis briggsae.